We begin with the raw amino-acid sequence, 502 residues long: ATP synthase subunit alpha (502 aa).

Residue 169–176 (GDRQTGKT) participates in ATP binding.

It belongs to the ATPase alpha/beta chains family. F-type ATPases have 2 components, CF(1) - the catalytic core - and CF(0) - the membrane proton channel. CF(1) has five subunits: alpha(3), beta(3), gamma(1), delta(1), epsilon(1). CF(0) has three main subunits: a(1), b(2) and c(9-12). The alpha and beta chains form an alternating ring which encloses part of the gamma chain. CF(1) is attached to CF(0) by a central stalk formed by the gamma and epsilon chains, while a peripheral stalk is formed by the delta and b chains.

The protein resides in the cell membrane. The enzyme catalyses ATP + H2O + 4 H(+)(in) = ADP + phosphate + 5 H(+)(out). Functionally, produces ATP from ADP in the presence of a proton gradient across the membrane. The alpha chain is a regulatory subunit. This chain is ATP synthase subunit alpha, found in Streptococcus pyogenes serotype M18 (strain MGAS8232).